The chain runs to 767 residues: Photosystem I P700 chlorophyll a apoprotein A1 (767 aa).

The segment at 1–22 (MTISPPESGEKNKKVLEDPVKA) is disordered. Over residues 8-22 (SGEKNKKVLEDPVKA) the composition is skewed to basic and acidic residues. 8 helical membrane-spanning segments follow: residues 76-99 (IFSAHFGHLAVIFIWMSAAFFHGA), 162-185 (LMALAIGAVVMAALMLHAGIFHYH), 201-225 (LNHHIAGLVGLGSLAWAGHCIHIGA), 309-327 (VSHHHLAFGVIAIIGGHMY), 368-391 (RHAQLAVNLAMLGSISILVSHHMY), 407-433 (LGLFTHHMWIGGLFIVGAGAHAGIAMV), 455-477 (ALISHLNWVCMWLGFHSFGLYIH), and 558-576 (LMIHHIHAFQIHVTVLILL). Positions 600 and 609 each coordinate [4Fe-4S] cluster. The next 2 helical transmembrane spans lie at 616–637 (HVFLALFWMYNCLSIVIFHFSW) and 681–703 (ISMYGLMFLGAHFIWAFSLMFLF). Residue His-692 coordinates divinylchlorophyll a'. Residues Met-700 and Tyr-708 each coordinate divinyl chlorophyll a. Trp-709 is a phylloquinone binding site. The helical transmembrane segment at 741–761 (AVGVTHFLVGGIATTWAFFHA) threads the bilayer.

It belongs to the PsaA/PsaB family. As to quaternary structure, the PsaA/B heterodimer binds the P700 divinyl chlorophyll special pair and subsequent electron acceptors. PSI consists of a core antenna complex that captures photons, and an electron transfer chain that converts photonic excitation into a charge separation. The cyanobacterial PSI reaction center is composed of one copy each of PsaA,B,C,D,E,F,I,J,K,L,M and X, and forms trimeric complexes. PSI electron transfer chain: 5 divinyl chlorophyll a, 1 divinyl chlorophyll a', 2 phylloquinones and 3 4Fe-4S clusters. PSI core antenna: 90 divinyl chlorophyll a, 22 carotenoids, 3 phospholipids and 1 galactolipid. P700 is a divinyl chlorophyll a/divinyl chlorophyll a' dimer, A0 is one or more divinyl chlorophyll a, A1 is one or both phylloquinones and FX is a shared 4Fe-4S iron-sulfur center. serves as cofactor.

The protein localises to the cellular thylakoid membrane. The catalysed reaction is reduced [plastocyanin] + hnu + oxidized [2Fe-2S]-[ferredoxin] = oxidized [plastocyanin] + reduced [2Fe-2S]-[ferredoxin]. Functionally, psaA and PsaB bind P700, the primary electron donor of photosystem I (PSI), as well as the electron acceptors A0, A1 and FX. PSI is a plastocyanin/cytochrome c6-ferredoxin oxidoreductase, converting photonic excitation into a charge separation, which transfers an electron from the donor P700 chlorophyll pair to the spectroscopically characterized acceptors A0, A1, FX, FA and FB in turn. Oxidized P700 is reduced on the lumenal side of the thylakoid membrane by plastocyanin or cytochrome c6. The protein is Photosystem I P700 chlorophyll a apoprotein A1 of Prochlorococcus marinus (strain MIT 9301).